A 696-amino-acid polypeptide reads, in one-letter code: D-(-)-3-hydroxybutyrate oligomer hydrolase (696 aa).

Residues 1-26 (MTKLGWGRRVVWGAALAAVAMLGACN) form the signal peptide. The active-site Charge relay system is the Ser-309.

This sequence belongs to the D-(-)-3-hydroxybutyrate oligomer hydrolase family.

It is found in the secreted. The enzyme catalyses (3R)-hydroxybutanoate dimer + H2O = 2 (R)-3-hydroxybutanoate + H(+). It participates in lipid metabolism; butanoate metabolism. Participates in the degradation of poly-3-hydroxybutyrate (PHB). It works downstream of poly(3-hydroxybutyrate) depolymerase, hydrolyzing D(-)-3-hydroxybutyrate oligomers of various length (3HB-oligomers) into 3HB-monomers. The protein is D-(-)-3-hydroxybutyrate oligomer hydrolase of Burkholderia cenocepacia (strain HI2424).